A 164-amino-acid chain; its full sequence is Large ribosomal subunit protein uL11 (164 aa).

Belongs to the universal ribosomal protein uL11 family. In terms of assembly, part of the ribosomal stalk of the 50S ribosomal subunit. Interacts with L10 and the large rRNA to form the base of the stalk. L10 forms an elongated spine to which L12 dimers bind in a sequential fashion forming a multimeric L10(L12)X complex.

Its function is as follows. Forms part of the ribosomal stalk which helps the ribosome interact with GTP-bound translation factors. This chain is Large ribosomal subunit protein uL11, found in Pyrococcus abyssi (strain GE5 / Orsay).